Here is a 335-residue protein sequence, read N- to C-terminus: NADH-quinone oxidoreductase subunit H (335 aa).

A run of 8 helical transmembrane segments spans residues Val-11 to Leu-31, Val-81 to Ile-101, Ile-114 to Gly-134, Val-154 to Phe-174, Leu-187 to Val-207, Phe-238 to Phe-258, Gln-270 to Leu-290, and Trp-307 to Tyr-327.

This sequence belongs to the complex I subunit 1 family. In terms of assembly, NDH-1 is composed of 13 different subunits. Subunits NuoA, H, J, K, L, M, N constitute the membrane sector of the complex.

The protein resides in the cell inner membrane. The enzyme catalyses a quinone + NADH + 5 H(+)(in) = a quinol + NAD(+) + 4 H(+)(out). Functionally, NDH-1 shuttles electrons from NADH, via FMN and iron-sulfur (Fe-S) centers, to quinones in the respiratory chain. The immediate electron acceptor for the enzyme in this species is believed to be ubiquinone. Couples the redox reaction to proton translocation (for every two electrons transferred, four hydrogen ions are translocated across the cytoplasmic membrane), and thus conserves the redox energy in a proton gradient. This subunit may bind ubiquinone. This is NADH-quinone oxidoreductase subunit H from Pseudomonas putida (strain ATCC 700007 / DSM 6899 / JCM 31910 / BCRC 17059 / LMG 24140 / F1).